The sequence spans 151 residues: Large ribosomal subunit protein bL9 (151 aa).

It belongs to the bacterial ribosomal protein bL9 family.

In terms of biological role, binds to the 23S rRNA. In Mycolicibacterium vanbaalenii (strain DSM 7251 / JCM 13017 / BCRC 16820 / KCTC 9966 / NRRL B-24157 / PYR-1) (Mycobacterium vanbaalenii), this protein is Large ribosomal subunit protein bL9.